The primary structure comprises 814 residues: MAIPGSLGECGYIRTVLGQQILGHLDSSSLALPSEARLRLAGSSGRGDPVARSQRIQEQVQQTLARRGRSSVVGGNLHRTSSVPEYVYKLHLVENDFVGRQSPAARDYDMLKVGLSGWRDGSTLKVPCTSIKPHREKKTWIEALREGLEHTTDHTDCPAHYVYSHYYFNSKKSNILVFQHIKDKSLQRNAIILLSPEHCTCQHVRLIPSSVLPSLFNQLQLSPELYFSNMGTLYMTSIKGTLCIQLLKGKLPAKHQANFVTMAERRVYTLLLSSTTSSETSFRRTGDTLPSVTSGQSRVHGLHFHHVICDCLSRNADLEMTLERAVNMLDADHVPLSKISAAATFIQHESFQKSEARKRVNQLQGIPKLLQLLKVQNEDVQRAVCGALRNLVFEDNDNKVTVVLGKVNITKREGGGQAAGYMKETWKLANKNPVFLGLLWNLSSSDKLKHLMITEALLTLTESVIIPFSGWPEGDYPKANGLLDFDIFYNVTGCLRNMSSAGPDGRKVMRRCDGLIDSLVHYVRGTIADYQPDDKATENCVCILHNLSYQLEAELPEKYSQSIYMQNRNIQTNSNKSIGCFGSRSRKVKEQYQDTPMPEERSSPRGIEWLWHSIVIRMYLSLIAKSSRNYTQEASLGALQNLTAGSGPIPTSVARMVVQKENGLQHTRKMLHVGDPSVKKTAVSLLRNLSRNLSLQNEIAKETLPDLVSIIPDTVPSTDLLIETTASACYTLNNLMQNSYQNARDLLNTGGLQKIMTISIGEGYAPNKASKAASVLLYSLWAHTELHNAYKKAQFKKTDFVNSRTAKASHSLKD.

Positions 1–329 (MAIPGSLGEC…MTLERAVNML (329 aa)) are required for binding to single-stranded DNA. Phosphoserine is present on Ser44. Omega-N-methylarginine is present on Arg46. Ser82 and Ser130 each carry phosphoserine. ARM repeat units follow at residues 200 to 240 (TCQH…SIKG), 309 to 352 (CDCL…ESFQ), 354 to 393 (SEAR…NLVF), 503 to 549 (PDGR…NLSY), 604 to 644 (PRGI…NLTA), 652 to 691 (SVAR…NLSR), 696 to 737 (QNEI…NLMQ), and 740 to 782 (YQNA…SLWA).

This sequence belongs to the beta-catenin family. Interacts with DSC2. Interacts with JUP. Interacts with KRT5/CK5, KRT8/CK8, KRT14/CK14, KRT18/CK18 and VIM. Interacts (via N-terminus) with MARK3/C-TAK1. Interacts with DSP. Interacts with DSG1, DSG2 and DSG3. Interacts (via N-terminus) with CTNNB1. Interacts with CDH1. Interacts with the RNA polymerase III (Pol III) complex proteins POLR3A/RPC155, POLR3F/RPC39 and POLR3C/RPC82. Interacts with CTNNA3. Interacts (via N-terminus) with SCN5A/Nav1.5. Interacts with ANK3/ANKG and GJA1/CX43. In terms of tissue distribution, expressed in the heart (at protein level).

The protein localises to the nucleus. The protein resides in the cell junction. It is found in the desmosome. Its subcellular location is the cytoplasm. In terms of biological role, a component of desmosome cell-cell junctions which are required for positive regulation of cellular adhesion. Regulates focal adhesion turnover resulting in changes in focal adhesion size, cell adhesion and cell spreading, potentially via transcriptional modulation of beta-integrins. Required to maintain gingival epithelial barrier function. Important component of the desmosome that is also required for localization of desmosome component proteins such as DSC2, DSG2 and JUP to the desmosome cell-cell junction. Required for the formation of desmosome cell junctions in cardiomyocytes, thereby required for the correct formation of the heart, specifically trabeculation and formation of the atria walls. Loss of desmosome cell junctions leads to mis-localization of DSP and DSG2 resulting in disruption of cell-cell adhesion and disordered intermediate filaments. Modulates profibrotic gene expression in cardiomyocytes via regulation of DSP expression and subsequent activation of downstream TGFB1 and MAPK14/p38 MAPK signaling. Required for cardiac sodium current propagation and electrical synchrony in cardiac myocytes, via ANK3 stabilization and modulation of SCN5A/Nav1.5 localization to cell-cell junctions. Required for mitochondrial function, nuclear envelope integrity and positive regulation of SIRT3 transcription via maintaining DES localization at its nuclear envelope and cell tip anchoring points, and thereby preserving regulation of the transcriptional program. Maintenance of nuclear envelope integrity protects against DNA damage and transcriptional dysregulation of genes, especially those involved in the electron transport chain, thereby preserving mitochondrial function and protecting against superoxide radical anion generation. Binds single-stranded DNA (ssDNA). May regulate the localization of GJA1 to gap junctions in intercalated disks of the heart. The protein is Plakophilin-2 of Rattus norvegicus (Rat).